Here is a 779-residue protein sequence, read N- to C-terminus: Membrane metallo-endopeptidase-like 1 (779 aa).

The Cytoplasmic portion of the chain corresponds to 1–27 (MGKSEGPVGMVESAGRAGQKRPGFLEG). Residues 28 to 48 (GLLLLLLLVTAALVALGVLYA) traverse the membrane as a helical; Signal-anchor for type II membrane protein segment. Residues 49–779 (DRRGKQLPRL…MHPKERCRVW (731 aa)) lie on the Lumenal side of the membrane. Residues 88-779 (VCTTPGCVIA…MHPKERCRVW (692 aa)) form the Peptidase M13 domain. Disulfide bonds link Cys-89–Cys-94, Cys-112–Cys-764, Cys-120–Cys-724, Cys-175–Cys-439, and Cys-650–Cys-776. An a peptide-binding site is contributed by Arg-135. Asn-177, Asn-207, Asn-350, and Asn-530 each carry an N-linked (GlcNAc...) asparagine glycan. A coiled-coil region spans residues 515–560 (LEEMNRRLDEEYSNLNFSEDLYFENSLQNLKVGAQRSLRKLREKVD). His-613 contributes to the Zn(2+) binding site. Glu-614 is a catalytic residue. Residue His-617 coordinates Zn(2+). N-linked (GlcNAc...) asparagine glycosylation is present at Asn-657. Zn(2+) is bound at residue Glu-676. Asp-680 functions as the Proton donor in the catalytic mechanism.

The protein belongs to the peptidase M13 family. Requires Zn(2+) as cofactor. Post-translationally, N-glycosylated. Predominantly expressed in testis. Weakly expressed in brain, kidney and heart.

The protein localises to the membrane. The protein resides in the secreted. The catalysed reaction is Preferential cleavage of polypeptides between hydrophobic residues, particularly with Phe or Tyr at P1'.. Inhibited by thiorphan and phosphoramidon. Functionally, metalloprotease involved in sperm function, possibly by modulating the processes of fertilization and early embryonic development. Degrades a broad variety of small peptides with a preference for peptides shorter than 3 kDa containing neutral bulky aliphatic or aromatic amino acid residues. Shares the same substrate specificity with MME and cleaves peptides at the same amide bond. This chain is Membrane metallo-endopeptidase-like 1 (MMEL1), found in Homo sapiens (Human).